The primary structure comprises 196 residues: Dephospho-CoA kinase (196 aa).

The DPCK domain occupies 6 to 196 (AIALTGGIGT…QVERFLKTLL (191 aa)). Residue 14-19 (GTGKST) participates in ATP binding.

The protein belongs to the CoaE family.

The protein resides in the cytoplasm. It carries out the reaction 3'-dephospho-CoA + ATP = ADP + CoA + H(+). Its pathway is cofactor biosynthesis; coenzyme A biosynthesis; CoA from (R)-pantothenate: step 5/5. Functionally, catalyzes the phosphorylation of the 3'-hydroxyl group of dephosphocoenzyme A to form coenzyme A. The chain is Dephospho-CoA kinase from Helicobacter pylori (strain ATCC 700392 / 26695) (Campylobacter pylori).